The following is a 195-amino-acid chain: Imidazoleglycerol-phosphate dehydratase (195 aa).

It belongs to the imidazoleglycerol-phosphate dehydratase family.

It is found in the cytoplasm. It catalyses the reaction D-erythro-1-(imidazol-4-yl)glycerol 3-phosphate = 3-(imidazol-4-yl)-2-oxopropyl phosphate + H2O. The protein operates within amino-acid biosynthesis; L-histidine biosynthesis; L-histidine from 5-phospho-alpha-D-ribose 1-diphosphate: step 6/9. The protein is Imidazoleglycerol-phosphate dehydratase of Ruegeria pomeroyi (strain ATCC 700808 / DSM 15171 / DSS-3) (Silicibacter pomeroyi).